The primary structure comprises 198 residues: NADH-quinone oxidoreductase subunit B 1 (198 aa).

Residues Cys-77, Cys-78, Cys-142, and Cys-172 each contribute to the [4Fe-4S] cluster site.

The protein belongs to the complex I 20 kDa subunit family. In terms of assembly, NDH-1 is composed of 14 different subunits. Subunits NuoB, C, D, E, F, and G constitute the peripheral sector of the complex. It depends on [4Fe-4S] cluster as a cofactor.

It is found in the cell inner membrane. It carries out the reaction a quinone + NADH + 5 H(+)(in) = a quinol + NAD(+) + 4 H(+)(out). Functionally, NDH-1 shuttles electrons from NADH, via FMN and iron-sulfur (Fe-S) centers, to quinones in the respiratory chain. The immediate electron acceptor for the enzyme in this species is believed to be ubiquinone. Couples the redox reaction to proton translocation (for every two electrons transferred, four hydrogen ions are translocated across the cytoplasmic membrane), and thus conserves the redox energy in a proton gradient. The sequence is that of NADH-quinone oxidoreductase subunit B 1 from Rhodopseudomonas palustris (strain ATCC BAA-98 / CGA009).